The primary structure comprises 640 residues: Calpain-5 (640 aa).

A Calpain catalytic domain is found at 26–343; that stretch reads LFEDPLFPAT…FTDIIKCRLI (318 aa). Active-site residues include Cys81, His252, and Asn284. Positions 344–496 are domain III; sequence NTSYLSIHKT…VFTDVPSNCR (153 aa). A C2 domain is found at 499-617; sequence RLDEPPRTCW…HTLHLQDRSS (119 aa).

The protein belongs to the peptidase C2 family.

Functionally, calcium-regulated non-lysosomal thiol-protease. The sequence is that of Calpain-5 (Capn5) from Mus musculus (Mouse).